We begin with the raw amino-acid sequence, 448 residues long: MQVPKNNIYTVSRLNGEVRQILEGQLGKVWLNGEISNFSAPSSGHWYLTLKDHYSQIRCAMFKGRNQSVSFKPVNGQQVLVKGAISVYEPRGDYQLLIESMLPAGDGLLAQQFEALKMKLAAQGLFAADTKRQLPKNIQRIGVITSPTGAAIRDVLHVLARRDPSIEVIIYPTQVQGESADLNICQAINIANQRLEVDVLLLTRGGGSLEDLWCFNSEALAHTIYNSALPVVSAVGHEVDTTISDYVADVRAPTPSAGAELLSQDSDNKSQRLATVLSRLKQSANHYQLKQERRLSLLEHRLQRLDPKRTLQQFEQRFDEMQLRLEAALSNKLHGLSRRQQQLANRLEKQSPKHKLALETNRLNYLATRLQDAMQDTLNQSEQRIKYAAHQLETVSPLATLSRGYSITTDANNQIIDNAAQLSVGDKINTRLRHGQVQSTVTQITDES.

It belongs to the XseA family. As to quaternary structure, heterooligomer composed of large and small subunits.

Its subcellular location is the cytoplasm. The enzyme catalyses Exonucleolytic cleavage in either 5'- to 3'- or 3'- to 5'-direction to yield nucleoside 5'-phosphates.. Functionally, bidirectionally degrades single-stranded DNA into large acid-insoluble oligonucleotides, which are then degraded further into small acid-soluble oligonucleotides. The protein is Exodeoxyribonuclease 7 large subunit of Shewanella sp. (strain MR-7).